The sequence spans 427 residues: Trigger factor (427 aa).

The PPIase FKBP-type domain maps to 163-248 (GDTVVIDFVG…IHEVKTKEVP (86 aa)).

The protein belongs to the FKBP-type PPIase family. Tig subfamily.

It localises to the cytoplasm. The catalysed reaction is [protein]-peptidylproline (omega=180) = [protein]-peptidylproline (omega=0). Functionally, involved in protein export. Acts as a chaperone by maintaining the newly synthesized protein in an open conformation. Functions as a peptidyl-prolyl cis-trans isomerase. In Streptococcus agalactiae serotype III (strain NEM316), this protein is Trigger factor.